The sequence spans 301 residues: MLPSIAKHAALHQVNPLKKHGQNFIFDSSLCDKIVRASNLAENSRVLEIGPGTGGLTRSILQKNPESLTVIETDARCLPLLNEIKEYYPNLNIIKQDALKINLTDLSYDIVNSVGFAYKKREVKPITNRRANDIGESKSIDYKVTIISNLPYHIGTELVIRWLKEARLITSMTLMLQKEVVERICAIPSTKAYGRLSVICQLIAKVEKCFDVAPTAFYPPPKVYSAIVKLIPLENPPSIALINKVEQITKLAFAGRRKMIKSSLKNLVPNIYEVLTQLKINDNYRAENLAPQDYLRIAEIL.

6 residues coordinate S-adenosyl-L-methionine: N23, I25, G50, E72, D97, and N149.

It belongs to the class I-like SAM-binding methyltransferase superfamily. rRNA adenine N(6)-methyltransferase family. RsmA subfamily.

The protein resides in the cytoplasm. The catalysed reaction is adenosine(1518)/adenosine(1519) in 16S rRNA + 4 S-adenosyl-L-methionine = N(6)-dimethyladenosine(1518)/N(6)-dimethyladenosine(1519) in 16S rRNA + 4 S-adenosyl-L-homocysteine + 4 H(+). Specifically dimethylates two adjacent adenosines (A1518 and A1519) in the loop of a conserved hairpin near the 3'-end of 16S rRNA in the 30S particle. May play a critical role in biogenesis of 30S subunits. This is Ribosomal RNA small subunit methyltransferase A from Rickettsia conorii (strain ATCC VR-613 / Malish 7).